Reading from the N-terminus, the 780-residue chain is Catenin beta-1 (780 aa).

The disordered stretch occupies residues 34-56; sequence GIHSGATTTAPSLSGKGNPEDDD. 10 ARM repeats span residues 140 to 179, 224 to 263, 266 to 305, 350 to 389, 399 to 430, 431 to 472, 478 to 518, 520 to 561, 583 to 622, and 624 to 663; these read NYQD…QLSK, REGL…NLLL, EGAK…ILAY, SSNK…NLSD, GLLG…TCNN, YKNK…HLTS, EMAQ…NLAL, PANH…QFVE, IHNR…ELAQ, and KEAA…RMSE. Positions 735–744 are enriched in basic and acidic residues; it reads EHEMAGHHPG. Residues 735-770 are disordered; that stretch reads EHEMAGHHPGPDYPVDGLPDLGHTQDLIDGLPPGDS.

It belongs to the beta-catenin family. Interacts with adnpa. Interacts with cdh1 during oogenesis and in the unfertilized egg. Interacts with ctnna1 and cdh2. Post-translationally, phosphorylation by gsk3b promotes ubiquitination and subsequent degradation by the proteasome. Ubiquitinated when phosphorylated by gsk3b, leading to its degradation. Expressed in the successional lamina, also expressed in both the epithelial and mesenchymal cells of the developing replacement tooth (at protein level). Expressed in the enamel organ as well as in the inner and outer dental epithelium during replacement tooth morphogenesis (at protein level). Expressed in the differentiated, polarized odontoblasts that line the dentine matrix as well as in the inner and outer dental epithelium during tooth cytodifferentiation (at protein level). Expressed in the reduced enamel organ, odontoblasts and weakly at the center of the dental papilla of the functional tooth as well as in the epithelial crypts surrounding the functional tooth (at protein level). Expressed in the liver (at protein level). Expressed at intercalated disks in the heart (at protein level). Expressed in the ovary.

It localises to the cytoplasm. The protein localises to the nucleus. It is found in the cell membrane. Its subcellular location is the cell junction. The protein resides in the adherens junction. In terms of biological role, key downstream component of the canonical Wnt signaling pathway. In the absence of Wnt, forms a complex with axin1, axin2, apc, csnk1a1 and gsk3b that promotes phosphorylation on N-terminal Ser and Thr residues and ubiquitination of ctnnb1 and its subsequent degradation by the proteasome. In the presence of Wnt ligand, ctnnb1 is not ubiquitinated and accumulates in the nucleus, where it acts as a coactivator for transcription factors of the TCF/LEF family, leading to activate Wnt responsive genes. Plays a key role in dorsoventral patterning: in prospective ventral blastomeres, its down-regulation by axin1 and axin2 leads to inhibit the Wnt signaling pathway, while in prospective dorsal blastomeres, degradation of axin results in stabilization and nuclear translocation of ctnnb1. In Danio rerio (Zebrafish), this protein is Catenin beta-1.